The chain runs to 234 residues: uncharacterized protein (234 aa).

The disordered stretch occupies residues 62–99; that stretch reads NEESISDLNSDNPGNSEPSDVESFVLSDEDENSEKDFS. A compositionally biased stretch (polar residues) spans 67-79; that stretch reads SDLNSDNPGNSEP.

This is an uncharacterized protein from Acanthamoeba polyphaga (Amoeba).